The sequence spans 198 residues: MPLKLRVAGVDEAGRGPLAGAVFAAAVILDPAKPIAGLADSKVLSEAQRDELAVLIKRDALAWCVASASVEEIDKLNILHATMLAMTRAVEGLPVRPDLAQIDGNRVPKHLPVPGEAIVKGDAKVAAISAASILAKTARDAELVALDALHPQYGFARHKGYPTAEHLAAIEAHGVLPAHRKTFGPVKAWLASHQGALF.

The region spanning 5–195 is the RNase H type-2 domain; the sequence is LRVAGVDEAG…VKAWLASHQG (191 aa). Residues Asp-11, Glu-12, and Asp-103 each contribute to the a divalent metal cation site.

Belongs to the RNase HII family. Mn(2+) is required as a cofactor. Mg(2+) serves as cofactor.

The protein localises to the cytoplasm. The enzyme catalyses Endonucleolytic cleavage to 5'-phosphomonoester.. Functionally, endonuclease that specifically degrades the RNA of RNA-DNA hybrids. In Chromobacterium violaceum (strain ATCC 12472 / DSM 30191 / JCM 1249 / CCUG 213 / NBRC 12614 / NCIMB 9131 / NCTC 9757 / MK), this protein is Ribonuclease HII.